Here is a 770-residue protein sequence, read N- to C-terminus: Signal transducer and activator of transcription 3 (770 aa).

Ala2 bears the N-acetylalanine mark. Lys49 and Lys87 each carry N6-acetyllysine. Positions 150–162 match the Essential for nuclear import motif; the sequence is DVRKRVQDLEQKM. Positions 580 to 670 constitute an SH2 domain; sequence WNEGYIMGFI…DATNILVSPL (91 aa). Allysine; alternate occurs at positions 601, 615, and 631. An N6-acetyllysine; alternate mark is found at Lys601, Lys615, and Lys631. Tyr640 is modified (phosphotyrosine; by TYK2). Lys685 is subject to Allysine; alternate. Lys685 carries the post-translational modification N6-acetyllysine; alternate. Pro704 carries the phosphotyrosine modification. At Tyr705 the chain carries Phosphotyrosine; by FER and PTK6. Residue Lys707 is modified to N6-acetyllysine. The residue at position 714 (Thr714) is a Phosphothreonine. The residue at position 727 (Ser727) is a Phosphoserine; by DYRK2, NLK, NEK6, IRAK1, RPS6KA5, ZIPK/DAPK3 and PKC/PRKCE.

Belongs to the transcription factor STAT family. As to quaternary structure, forms a homodimer or a heterodimer with a related family member (at least STAT1). Component of a promoter-binding complex composed of STAT3, NFATC3 and NFATC4; complex formation is enhanced by calcineurin. Interacts with IL31RA, NCOA1, PELP1, SIPAR, SOCS7, STATIP1 and TMF1. Interacts with IL23R in presence of IL23. Interacts (via SH2 domain) with NLK. Interacts with ARL2BP; the interaction is enhanced by LIF and JAK1 expression. Interacts with KPNA4 and KPNA5; KPNA4 may be the primary mediator of nuclear import. Interacts with CAV2; the interaction is increased on insulin-induced tyrosine phosphorylation of CAV2 and leads to STAT3 activation. Interacts with ARL2BP; interaction is enhanced with ARL2. Interacts with NEK6. Binds to CDK9 when activated and nuclear. Interacts with BMX. Interacts with ZIPK/DAPK3. Interacts with PIAS3; the interaction occurs on stimulation by IL6, CNTF or OSM and inhibits the DNA binding activity of STAT3. In prostate cancer cells, interacts with PRKCE and promotes DNA binding activity of STAT3. Interacts with STMN3, antagonizing its microtubule-destabilizing activity. Interacts with the 'Lys-129' acetylated form of BIRC5/survivin. Interacts with FER. Interacts (via SH2 domain) with EIF2AK2/PKR (via the kinase catalytic domain). Interacts with INPP5F; the interaction is independent of STAT3 Tyr-705 phosphorylation status. Interacts with FGFR4. Interacts with OCIAD1. Interacts with OCIAD2. Interacts (unphosphorylated or phosphorylated at Ser-727) with PHB1. Interacts and may form heterodimers with NHLH1. Found in a complex with SLC39A6, SLC39A10 and with the 'Ser-727' phosphorylated form of STAT3 throughout mitosis. Interacts (when phosphorylated at Tyr-705) with CD274/PD-L1; promoting nuclear translocation of CD274/PD-L1. Interacts (when acetylated) with EP300 (via bromo domain); interaction takes place following STAT3 acetylation by EP300 and promotes enhanceosome assembly. Interacts (when acetylated) with BRD2 (via bromo domain); interaction promotes STAT3 recruitment to chromatin and T-helper Th17 cell differentiation. Interacts with FAM220A/SIPAR; the interaction occurs in both the nucleus and the cytoplasm, is enhanced by IL6 and promotes STAT3 dephosphorylation. Interacts in both unphosphorylated and phosphorylated forms with FAM220A but interacts preferentially in the phosphorylated form in the nucleus. Interacts with PTPN2; the interaction is promoted by FAM220A and leads to STAT3 dephosphorylation which negatively regulates STAT3 transcriptional activator activity. In terms of assembly, (Microbial infection) Interacts with HCV core protein. (Microbial infection) Interacts with S.typhimurium SarA. As to quaternary structure, (Microbial infection) Interacts with human cytomegalovirus (HHV-5) immediate early protein IE1; this interaction leads to STAT3 nuclear accumulation and disruption of IL6-induced STAT3 phosphorylation. In terms of processing, tyrosine phosphorylated upon stimulation with EGF. Tyrosine phosphorylated in response to constitutively activated FGFR1, FGFR2, FGFR3 and FGFR4. Activated through tyrosine phosphorylation by BMX. Tyrosine phosphorylated in response to IL6, IL11, LIF, CNTF, KITLG/SCF, CSF1, EGF, PDGF, IFN-alpha, LEP and OSM. Activated KIT promotes phosphorylation on tyrosine residues and subsequent translocation to the nucleus. Phosphorylated on serine upon DNA damage, probably by ATM or ATR. Serine phosphorylation is important for the formation of stable DNA-binding STAT3 homodimers and maximal transcriptional activity. ARL2BP may participate in keeping the phosphorylated state of STAT3 within the nucleus. Upon LPS challenge, phosphorylated within the nucleus by IRAK1. Upon erythropoietin treatment, phosphorylated on Ser-727 by RPS6KA5. Dephosphorylation on tyrosine residues by PTPN2 negatively regulates IL6/interleukin-6 signaling. Phosphorylation at Tyr-705 by PTK6, isoform M2 of PKM (PKM2) or FER leads to an increase of its transcriptional activity. Phosphorylation at Tyr-705 is increased in the presence of calcineurin. Phosphorylation at Tyr-640 by TYK2 negatively regulates transcriptional activity. Acetylated on lysine residues by EP300/p300, promoting its activation. Acetylation at Lys-49 and Lys-87 by EP300/p300 promotes its activation. Acetylation at Lys-87 by EP300/p300 promotes its association with BRD2 and recruitment to chromatin. Deacetylated at Lys-49 and Lys-87 by HDAC1. Acetylation at Lys-685 by EP300/p300 promotes its homodimerization and activation. Deacetylated at Lys-685 by HDAC3. Acetylated on lysine residues by CREBBP. Deacetylation by LOXL3 leads to disrupt STAT3 dimerization and inhibit STAT3 transcription activity. Oxidation of lysine residues to allysine on STAT3 preferentially takes place on lysine residues that are acetylated. Post-translationally, some lysine residues are oxidized to allysine by LOXL3, leading to disrupt STAT3 dimerization and inhibit STAT3 transcription activity. Oxidation of lysine residues to allysine on STAT3 preferentially takes place on lysine residues that are acetylated. In terms of processing, (Microbial infection) Phosphorylated on Tyr-705 in the presence of S.typhimurium SarA. Heart, brain, placenta, lung, liver, skeletal muscle, kidney and pancreas. Expressed in naive CD4(+) T cells as well as T-helper Th17, Th1 and Th2 cells.

The protein resides in the cytoplasm. The protein localises to the nucleus. Its function is as follows. Signal transducer and transcription activator that mediates cellular responses to interleukins, KITLG/SCF, LEP and other growth factors. Once activated, recruits coactivators, such as NCOA1 or MED1, to the promoter region of the target gene. May mediate cellular responses to activated FGFR1, FGFR2, FGFR3 and FGFR4. Upon activation of IL6ST/gp130 signaling by interleukin-6 (IL6), binds to the IL6-responsive elements identified in the promoters of various acute-phase protein genes. Activated by IL31 through IL31RA. Acts as a regulator of inflammatory response by regulating differentiation of naive CD4(+) T-cells into T-helper Th17 or regulatory T-cells (Treg): acetylation promotes its transcription activity and cell differentiation while deacetylation and oxidation of lysine residues by LOXL3 inhibits differentiation. Involved in cell cycle regulation by inducing the expression of key genes for the progression from G1 to S phase, such as CCND1. Mediates the effects of LEP on melanocortin production, body energy homeostasis and lactation. May play an apoptotic role by transctivating BIRC5 expression under LEP activation. Cytoplasmic STAT3 represses macroautophagy by inhibiting EIF2AK2/PKR activity. Plays a crucial role in basal beta cell functions, such as regulation of insulin secretion. Following JAK/STAT signaling activation and as part of a complex with NFATC3 and NFATC4, binds to the alpha-beta E4 promoter region of CRYAB and activates transcription in cardiomyocytes. The polypeptide is Signal transducer and activator of transcription 3 (Homo sapiens (Human)).